Consider the following 150-residue polypeptide: Glycine cleavage system H-like protein gcvH2 (150 aa).

The Lipoyl-binding domain occupies 44 to 126; sequence VATVGLSSFG…PANNWMVKFK (83 aa).

The protein belongs to the GcvH family.

This Dictyostelium discoideum (Social amoeba) protein is Glycine cleavage system H-like protein gcvH2 (gcvH2).